A 68-amino-acid polypeptide reads, in one-letter code: Defensin gallicin (68 aa).

An N-terminal signal peptide occupies residues 1–16 (MWIESDAGVAIDRHAR).

Post-translationally, contains 5 disulfide bonds. As to expression, expressed in hemolymph, gills, digestive gland, foot, adductor muscles and mantle.

It localises to the secreted. Its subcellular location is the target cell membrane. Shows antibacterial activity against numerous Gram-positive bacteria. It selectively inhibits peptidoglycan biosynthesis through complex formation with the cell wall precursor lipid II (1:1 molar ratio) thus inhibiting cell wall synthesis. The chain is Defensin gallicin from Mytilus galloprovincialis (Mediterranean mussel).